Consider the following 206-residue polypeptide: Potassium channel B446_29190 (206 aa).

M1 is a topological domain (cytoplasmic). Residues 2-25 (NESGRVEAFSDGVFAIAITLLILD) traverse the membrane as a helical segment. Residues 6–12 (RVEAFSD) carry the RxxxFSD motif motif. Residues 26-44 (IKVPKADGPGGLWHALGAQ) are Extracellular-facing. The segment at 31-34 (ADGP) is short helix H1. A short helix H2 region spans residues 36 to 42 (GLWHALG). The chain crosses the membrane as a helical span at residues 45–70 (WPSYAAYVVSFLVIGIMWVNHHQVFS). Topologically, residues 71 to 76 (YVARVD) are cytoplasmic. A helical membrane pass occupies residues 77-102 (RALMFLNLLVLMVVAAVPWPTAMLAE). Residues 103-110 (YLREDRAS) lie on the Extracellular side of the membrane. Residues 111–135 (HVAAAVYSLVMVAMALAFQALWWHL) traverse the membrane as a helical segment. Residues 136–147 (TRTGHLFDPRVD) lie on the Cytoplasmic side of the membrane. The chain crosses the membrane as a helical span at residues 148-174 (APAARATRIRFALGSLGYPLTVGLAFV). At 175–176 (SA) the chain is on the extracellular side. A helical membrane pass occupies residues 177-192 (PLTLAAHGLLALYYGF). Topologically, residues 193–206 (NQVPVPTREAAAPS) are cytoplasmic.

It belongs to the TMEM175 family. In terms of assembly, homotetramer.

It is found in the membrane. It carries out the reaction K(+)(in) = K(+)(out). Potassium channel. This chain is Potassium channel B446_29190, found in Streptomyces collinus (strain DSM 40733 / Tue 365).